Consider the following 567-residue polypeptide: Pyrethroid hydrolase Ces2e (567 aa).

An N-terminal signal peptide occupies residues 1–36 (MAQTRAWKSIMPLESLPGWLNAVVWGLLLLFCQVQG). At Gln-37 the chain carries Pyrrolidone carboxylic acid. An intrachain disulfide couples Cys-105 to Cys-132. The Acyl-ester intermediate role is filled by Ser-237. Residues Cys-289 and Cys-300 are joined by a disulfide bond. Catalysis depends on charge relay system residues Glu-354 and His-465.

This sequence belongs to the type-B carboxylesterase/lipase family. In terms of tissue distribution, expressed in liver.

The protein resides in the microsome. It carries out the reaction all-trans-retinyl hexadecanoate + H2O = all-trans-retinol + hexadecanoate + H(+). The enzyme catalyses (-)-trans-permethrin + H2O = (3-phenoxyphenyl)methanol + (1S,3R)-3-(2,2-dichlorovinyl)-2,2-dimethylcyclopropanecarboxylate + H(+). Its function is as follows. Carboxylesterase that catalyzes the hydrolysis of pyrethroids pesticides. Hydrolyzes trans-permethrin at a rate about 22-fold higher than cis-permethrin. Also hydrolyzes trans-cypermethrin. Hydrolyzes retinyl esters. In Rattus norvegicus (Rat), this protein is Pyrethroid hydrolase Ces2e.